The sequence spans 265 residues: Mlc titration factor A (265 aa).

Histidine 111, histidine 148, histidine 152, and glutamate 211 together coordinate Zn(2+).

This sequence belongs to the MtfA family. Interacts with Mlc. Zn(2+) is required as a cofactor.

It is found in the cytoplasm. In terms of biological role, involved in the modulation of the activity of the glucose-phosphotransferase system (glucose-PTS). Interacts with the transcriptional repressor Mlc, preventing its interaction with DNA and leading to the modulation of expression of genes regulated by Mlc, including ptsG, which encodes the PTS system glucose-specific EIICB component. Shows zinc-dependent metallopeptidase activity. This Enterobacter sp. (strain 638) protein is Mlc titration factor A.